A 227-amino-acid chain; its full sequence is A-type potassium channel modulatory protein KCNIP1 (227 aa).

The EF-hand 1; degenerate domain maps to 38 to 94 (LEMTMVCHRPEGLEQLEAQTNFTKRELQVLYRGFKNECPSGVVNEETFKQIYAQFFP). 3 EF-hand domains span residues 97-132 (DAST…LLRG), 133-168 (TVHE…IYDM), and 181-216 (TPRQ…DDNI). 9 residues coordinate Ca(2+): Asp146, Asn148, Asp150, Tyr152, Glu157, Asp194, Asn196, Asp198, and Glu205. The segment at 214–227 (DNIMRSLQLFQNVM) is interaction with KCND2.

It belongs to the recoverin family. Component of heteromultimeric potassium channels. Identified in potassium channel complexes containing KCND1, KCND2, KCND3, KCNIP1, KCNIP2, KCNIP3, KCNIP4, DPP6 and DPP10. Part of a heterooctamer composed of the tetrameric channel and four KCNIP1 chains. Probably part of a complex consisting of KCNIP1, KCNIP2 isoform 3 and KCND2. Self-associates to form homodimers and homotetramers. Interacts with KCNIP2 isoform 3 in a calcium-dependent manner. Interacts with KCND2; this interaction mediates the capture of both the N- and C-terminus of KCND2, thus preventing KCND2 N-type inactivation and modulates the channel gating kinetics. Interacts with KCND3; each KCNIP1 monomer interacts with two adjacent KCND3 subunits, through both the N-terminal inactivation ball of a KCND3 subunit and a C-terminal helix from the adjacent KCND3 subunit, clamping them together; this interaction stabilizes the tetrameric form and modulates the channel gating kinetics namely channel activation and inactivation kinetics and rate of recovery from inactivation. In terms of tissue distribution, detected in hippocampus and in the molecular layer of the dentate gyrus (at protein level). Isoform 1 and isoform 2 are predominantly expressed at equal levels in brain. Colocalizes with KCND3 in inhibitory interneurons in cortex and hippocampus and in striatal interneurons.

It localises to the cell membrane. The protein resides in the cytoplasm. It is found in the cell projection. The protein localises to the dendrite. Functionally, regulatory subunit of Kv4/D (Shal)-type voltage-gated rapidly inactivating A-type potassium channels. Regulates channel density, inactivation kinetics and rate of recovery from inactivation in a calcium-dependent and isoform-specific manner. Modulates KCND2/Kv4.2 currents. In vitro, modulates KCND1/Kv4.1 currents. Increases the presence of KCND2 at the cell surface. The chain is A-type potassium channel modulatory protein KCNIP1 from Rattus norvegicus (Rat).